Consider the following 373-residue polypeptide: UDP-N-acetylglucosamine--N-acetylmuramyl-(pentapeptide) pyrophosphoryl-undecaprenol N-acetylglucosamine transferase (373 aa).

UDP-N-acetyl-alpha-D-glucosamine contacts are provided by residues 15-17 (TGG), Asn-126, Arg-170, Ser-198, and Gln-300.

This sequence belongs to the glycosyltransferase 28 family. MurG subfamily.

Its subcellular location is the cell inner membrane. The enzyme catalyses di-trans,octa-cis-undecaprenyl diphospho-N-acetyl-alpha-D-muramoyl-L-alanyl-D-glutamyl-meso-2,6-diaminopimeloyl-D-alanyl-D-alanine + UDP-N-acetyl-alpha-D-glucosamine = di-trans,octa-cis-undecaprenyl diphospho-[N-acetyl-alpha-D-glucosaminyl-(1-&gt;4)]-N-acetyl-alpha-D-muramoyl-L-alanyl-D-glutamyl-meso-2,6-diaminopimeloyl-D-alanyl-D-alanine + UDP + H(+). Its pathway is cell wall biogenesis; peptidoglycan biosynthesis. Functionally, cell wall formation. Catalyzes the transfer of a GlcNAc subunit on undecaprenyl-pyrophosphoryl-MurNAc-pentapeptide (lipid intermediate I) to form undecaprenyl-pyrophosphoryl-MurNAc-(pentapeptide)GlcNAc (lipid intermediate II). The protein is UDP-N-acetylglucosamine--N-acetylmuramyl-(pentapeptide) pyrophosphoryl-undecaprenol N-acetylglucosamine transferase of Methylobacterium nodulans (strain LMG 21967 / CNCM I-2342 / ORS 2060).